Here is an 810-residue protein sequence, read N- to C-terminus: Plasminogen (810 aa).

The first 19 residues, Met-1–Gly-19, serve as a signal peptide directing secretion. The 79-residue stretch at Glu-20–Val-98 folds into the PAN domain. Intrachain disulfides connect Cys-49–Cys-73, Cys-53–Cys-61, Cys-103–Cys-181, Cys-124–Cys-164, Cys-152–Cys-176, Cys-185–Cys-262, Cys-188–Cys-316, Cys-206–Cys-245, Cys-234–Cys-257, Cys-275–Cys-352, Cys-296–Cys-335, and Cys-324–Cys-347. Kringle domains lie at Cys-103 to Cys-181 and Glu-184 to Cys-262. The tract at residues Lys-126–Glu-145 is disordered. 3 residues coordinate L-lysine: Arg-136, Asp-158, and Arg-172. Ser-268 is a glycosylation site (O-linked (GalNAc...) serine). In terms of domain architecture, Kringle 3 spans Cys-275–Cys-352. Residue Asn-308 is glycosylated (N-linked (GlcNAc...) asparagine). A glycan (O-linked (GalNAc...) threonine) is linked at Thr-365. 9 disulfides stabilise this stretch: Cys-377-Cys-454, Cys-398-Cys-437, Cys-426-Cys-449, Cys-481-Cys-560, Cys-502-Cys-543, Cys-531-Cys-555, Cys-567-Cys-685, Cys-577-Cys-585, and Cys-607-Cys-623. Kringle domains are found at residues Cys-377–Cys-454 and Cys-481–Cys-560. A disordered region spans residues Lys-396–Tyr-416. Residues Asp-432 and Arg-445 each coordinate L-lysine. Positions Val-581 to Arg-808 constitute a Peptidase S1 domain. Ser-597 carries the phosphoserine modification. Catalysis depends on charge relay system residues His-622 and Asp-665. The residue at position 688 (Ser-688) is a Phosphoserine. 3 disulfide bridges follow: Cys-699/Cys-766, Cys-729/Cys-745, and Cys-756/Cys-784. Ser-760 (charge relay system) is an active-site residue.

This sequence belongs to the peptidase S1 family. Plasminogen subfamily. In terms of assembly, interacts (both mature PLG and the angiostatin peptide) with CSPG4 and AMOT. Interacts (via the Kringle domains) with HRG; the interaction tethers PLG to the cell surface and enhances its activation. Interacts (via Kringle 4 domain) with ADA; the interaction stimulates PLG activation when in complex with DPP4. Angiostatin: Interacts with ATP5F1A; the interaction inhibits most of the angiogenic effects of angiostatin. Interacts (plasmin) with iripin-8, a serine protease inhibitor from Ixodes ricinus saliva. Interacts (plasmin) with iripin-1, a serine protease inhibitor from Ixodes ricinus saliva. Interacts (plasmin) with Kazal-type trypsin inhibitor, a serine protease inhibitor from Aedes aegypti. As to quaternary structure, (Microbial infection) Interacts with C.albicans GPD2; the interaction is direct and provides active plasmin on the surface of fungal cells. (Microbial infection) Interacts with Staphylococcus aureus protein FnbB; this interaction provides active plasmin on the surface of bacterial cells. In terms of assembly, (Microbial infection) Interacts with P.falciparum (strain NF54) enolase ENO (via DKSLVK motif); the interaction occurs at the ookinete cell surface and is required for ookinete invasion of the mosquito midgut. As to quaternary structure, (Microbial infection) Interacts with B.burgdorferi OspC. In terms of processing, N-linked glycan contains N-acetyllactosamine and sialic acid. O-linked glycans consist of Gal-GalNAc disaccharide modified with up to 2 sialic acid residues (microheterogeneity). In the presence of the inhibitor, the activation involves only cleavage after Arg-580, yielding two chains held together by two disulfide bonds. In the absence of the inhibitor, the activation involves additionally the removal of the activation peptide. Post-translationally, (Microbial infection) The Y.pestis Pla protein cleaves between Arg-580 and Val-581, generating plasmin which facilitates bacterial migration and infection. Present in plasma and many other extracellular fluids. It is synthesized in the liver.

Its subcellular location is the secreted. The catalysed reaction is Preferential cleavage: Lys-|-Xaa &gt; Arg-|-Xaa, higher selectivity than trypsin. Converts fibrin into soluble products.. Its activity is regulated as follows. Converted into plasmin by plasminogen activators, both plasminogen and its activator being bound to fibrin. Activated with catalytic amounts of streptokinase. Plasmin activity inhibited by SERPINE2. Functionally, plasmin dissolves the fibrin of blood clots and acts as a proteolytic factor in a variety of other processes including embryonic development, tissue remodeling, tumor invasion, and inflammation. In ovulation, weakens the walls of the Graafian follicle. It activates the urokinase-type plasminogen activator, collagenases and several complement zymogens, such as C1, C4 and C5. Cleavage of fibronectin and laminin leads to cell detachment and apoptosis. Also cleaves fibrin, thrombospondin and von Willebrand factor. Its role in tissue remodeling and tumor invasion may be modulated by CSPG4. Binds to cells. Its function is as follows. Angiostatin is an angiogenesis inhibitor that blocks neovascularization and growth of experimental primary and metastatic tumors in vivo. In terms of biological role, (Microbial infection) ENO/enoloase from parasite P.falciparum (strain NF54) interacts with PLG present in the mosquito blood meal to promote the invasion of the mosquito midgut by the parasite ookinete. The catalytic active form, plasmin, is essential for the invasion of the mosquito midgut. (Microbial infection) Binds to OspC on the surface of B.burgdorferi cells, possibly conferring an extracellular protease activity on the bacteria that allows it to traverse host tissue. Functionally, (Microbial infection) Interacts with dengue virus type 2 particles. Enhances dengue virus type 2 infection in Aedes aegypti mosquito midgut by increasing midgut internalization, resulting in higher infection rates and viral dissemination in mosquitoes. The chain is Plasminogen (PLG) from Homo sapiens (Human).